The primary structure comprises 200 residues: Lipopolysaccharide core heptose(II)-phosphate phosphatase (200 aa).

A signal peptide spans 1–25 (MLAFCRSSLKSKKYFIILLALAAIA).

It belongs to the phosphoglycerate mutase family. Ais subfamily.

The protein resides in the periplasm. It participates in bacterial outer membrane biogenesis; lipopolysaccharide metabolism. Catalyzes the dephosphorylation of heptose(II) of the outer membrane lipopolysaccharide core. The sequence is that of Lipopolysaccharide core heptose(II)-phosphate phosphatase from Escherichia coli O9:H4 (strain HS).